The chain runs to 3034 residues: Cadherin EGF LAG seven-pass G-type receptor 1 (3034 aa).

The first 29 residues, 1–29, serve as a signal peptide directing secretion; the sequence is MAPSSPRVLPALVLLAAAALPALELGAAA. The Extracellular segment spans residues 30 to 2484; sequence WELRVPGGAR…REHGEVLPLK (2455 aa). Low complexity predominate over residues 222–243; that stretch reads GTPSESPSVSPSLLNLSQPRAG. Positions 222–267 are disordered; that stretch reads GTPSESPSVSPSLLNLSQPRAGVVRRSRRGTGSSTSPQFPLPSYQV. Asparagine 236 is a glycosylation site (N-linked (GlcNAc...) asparagine). 9 Cadherin domains span residues 261 to 368, 369 to 474, 475 to 580, 581 to 702, 703 to 804, 805 to 907, 908 to 1014, 1015 to 1116, and 1121 to 1239; these read PLPS…SPVF, EQSE…YPQF, SEKR…APIF, VSSP…DPMF, TQPV…RPVF, QSSH…APRF, LRDF…PPVF, EKDE…PPEL, and ILFN…SPLL. N-linked (GlcNAc...) asparagine glycosylation is found at asparagine 561, asparagine 649, and asparagine 793. Residues asparagine 1129, asparagine 1154, asparagine 1228, asparagine 1264, asparagine 1274, and asparagine 1302 are each glycosylated (N-linked (GlcNAc...) asparagine). The 59-residue stretch at 1318–1376 folds into the EGF-like 1; calcium-binding domain; it reads DDNICLREPCENYMKCVSVLRFDSSAPFISSTTVLFRPIHPITGLRCRCPPGFTGDYCE. Intrachain disulfides connect cysteine 1322/cysteine 1333, cysteine 1327/cysteine 1364, cysteine 1366/cysteine 1375, cysteine 1382/cysteine 1393, cysteine 1387/cysteine 1402, cysteine 1404/cysteine 1413, cysteine 1422/cysteine 1433, cysteine 1427/cysteine 1443, and cysteine 1445/cysteine 1455. Residues 1378-1414 enclose the EGF-like 2; calcium-binding domain; the sequence is EIDLCYSNPCGANGRCRSREGGYTCECFEDFTGEHCQ. Residues 1418-1456 enclose the EGF-like 3; calcium-binding domain; sequence RSGRCASGVCKNGGTCVNLLIGGFHCVCPPGEYEHPYCE. One can recognise a Laminin G-like 1 domain in the interval 1457-1661; the sequence is VSTRSFPPQS…IANNGTRAGC (205 aa). N-linked (GlcNAc...) asparagine glycosylation is found at asparagine 1591, asparagine 1638, and asparagine 1655. Cystine bridges form between cysteine 1635–cysteine 1661, cysteine 1668–cysteine 1679, cysteine 1673–cysteine 1688, cysteine 1690–cysteine 1699, cysteine 1855–cysteine 1885, cysteine 1891–cysteine 1902, cysteine 1896–cysteine 1911, cysteine 1913–cysteine 1922, cysteine 1926–cysteine 1937, cysteine 1931–cysteine 1949, cysteine 1951–cysteine 1960, cysteine 1968–cysteine 1981, and cysteine 1983–cysteine 1993. The EGF-like 4; calcium-binding domain occupies 1664 to 1700; sequence QRNFCDGTSCQNGGTCVNRWNTYLCECPLRFGGKNCE. At asparagine 1681 the chain carries (3R)-3-hydroxyasparagine. A Laminin G-like 2 domain is found at 1704–1885; the sequence is PHPQRFTGES…ALKVRVKDGC (182 aa). One can recognise an EGF-like 5; calcium-binding domain in the interval 1887–1922; the sequence is VEDPCASSPCPPHSHCRDTWDSYSCICDRGYFGKKC. Aspartate 1904 is modified ((3R)-3-hydroxyaspartate). The 39-residue stretch at 1923–1961 folds into the EGF-like 6; calcium-binding domain; it reads VDACLLNPCKHVAACVRSPNTPRGYSCECGPGHYGQYCE. The region spanning 1962–1994 is the EGF-like 7; calcium-binding domain; that stretch reads NKVDLPCPKGWWGNPVCGPCHCAVSQGFDPDCN. A glycan (N-linked (GlcNAc...) asparagine) is linked at asparagine 1994. Residues 1996 to 2031 enclose the EGF-like 8; calcium-binding domain; it reads TNGQCQCKENYYKPPAQDACLPCDCFPHGSHSRACD. 5 cysteine pairs are disulfide-bonded: cysteine 2000-cysteine 2015, cysteine 2002-cysteine 2018, cysteine 2020-cysteine 2030, cysteine 2039-cysteine 2048, and cysteine 2051-cysteine 2063. Positions 2018–2065 constitute a Laminin EGF-like domain; the sequence is CDCFPHGSHSRACDMDTGQCACKPGVIGRQCNRCDNPFAEVTSLGCEV. Residues asparagine 2118, asparagine 2137, asparagine 2144, asparagine 2155, asparagine 2160, and asparagine 2272 are each glycosylated (N-linked (GlcNAc...) asparagine). A disordered region spans residues 2295–2346; sequence SVSFPADTFKPPEKKEGPVVRLTNRRTTPLTAQPEPRAERETSSSRRRRHPD. The region spanning 2312–2476 is the GAIN-B domain; that stretch reads PVVRLTNRRT…AVLMDISRRE (165 aa). Cystine bridges form between cysteine 2426-cysteine 2458 and cysteine 2446-cysteine 2460. Residues 2426-2476 are GPS; it reads CVFWNHSLDTGGTGGWSAKGCELLSRNRTHVTCQCSHSASCAVLMDISRRE. 2 N-linked (GlcNAc...) asparagine glycosylation sites follow: asparagine 2430 and asparagine 2452. A helical membrane pass occupies residues 2485–2505; the sequence is IITYAALSLSLVALLVAFVLL. Over 2506-2516 the chain is Cytoplasmic; the sequence is SLVRTLRSNLH. Residues 2517–2537 form a helical membrane-spanning segment; the sequence is SIHKNLITALFFSQLIFMVGI. Residue asparagine 2538 is glycosylated (N-linked (GlcNAc...) asparagine). Topologically, residues 2538 to 2542 are extracellular; it reads NQTEN. A helical membrane pass occupies residues 2543-2563; it reads PFLCTVVAILLHYVSMGTFAW. At 2564 to 2587 the chain is on the cytoplasmic side; the sequence is TLVENLHVYRMLTEVRNIDTGPMR. The helical transmembrane segment at 2588–2608 threads the bilayer; it reads FYHVVGWGIPAIVTGLAVGLD. The Extracellular segment spans residues 2609–2625; that stretch reads PQGYGNPDFCWLSLQDT. A helical transmembrane segment spans residues 2626-2646; it reads LIWSFAGPVGTVIIINTVIFV. Residues 2647 to 2670 lie on the Cytoplasmic side of the membrane; the sequence is LSAKVSCQRKHHYYERKGVVSMLR. Residues 2671–2691 traverse the membrane as a helical segment; it reads TAFLLLLLVTATWLLGLLAVN. At 2692 to 2694 the chain is on the extracellular side; sequence SDT. Residues 2695–2715 form a helical membrane-spanning segment; that stretch reads LSFHYLFAAFSCLQGIFVLLF. Residues 2716–3034 lie on the Cytoplasmic side of the membrane; it reads HCVAHREVRK…QANGSDSEKP (319 aa). The segment at 2774–3034 is disordered; it reads TASLDSTTRD…QANGSDSEKP (261 aa). A phosphoserine mark is found at serine 2776, serine 2779, serine 2886, and serine 2888. A compositionally biased stretch (basic and acidic residues) spans 2893–2909; it reads TEPHLKVETKVSVELHR. The segment covering 2976–2986 has biased composition (low complexity); it reads SPTSSRTSSLG. The span at 3003–3012 shows a compositional bias: basic and acidic residues; it reads PRREPGREHL. Residues 3020–3034 show a composition bias toward polar residues; sequence RTGSAQANGSDSEKP.

This sequence belongs to the G-protein coupled receptor 2 family. LN-TM7 subfamily. In terms of processing, the iron and 2-oxoglutarate dependent 3-hydroxylation of aspartate and asparagine is (R) stereospecific within EGF domains. In terms of tissue distribution, expressed in the brain, where it is localized principally in the ependymal cell layer, choroid plexus and the area postrema. Also found in spinal cord and in the eye.

It is found in the cell membrane. Its function is as follows. Receptor that may have an important role in cell/cell signaling during nervous system formation. The polypeptide is Cadherin EGF LAG seven-pass G-type receptor 1 (Celsr1) (Mus musculus (Mouse)).